We begin with the raw amino-acid sequence, 176 residues long: Ribosome maturation factor RimM (176 aa).

Residues 94–176 enclose the PRC barrel domain; the sequence is KDEFFYFEIL…RFGFEILQNS (83 aa).

It belongs to the RimM family. In terms of assembly, binds ribosomal protein uS19.

The protein resides in the cytoplasm. In terms of biological role, an accessory protein needed during the final step in the assembly of 30S ribosomal subunit, possibly for assembly of the head region. Essential for efficient processing of 16S rRNA. May be needed both before and after RbfA during the maturation of 16S rRNA. It has affinity for free ribosomal 30S subunits but not for 70S ribosomes. The chain is Ribosome maturation factor RimM from Campylobacter hominis (strain ATCC BAA-381 / DSM 21671 / CCUG 45161 / LMG 19568 / NCTC 13146 / CH001A).